The sequence spans 272 residues: MEGGGGGGGGGGGGGGGGGGGGAPYATRTAEEVFRDLRGRRAGMIKALTTDVEKFYKLCDPEKENLCLYGYPNETWEVTLPAEEVPPEIPEPALGINFARDGMNEKDWLALVAVHSDSWLLSVAFYFGARFGFDREARRRLFNMINNLPTIFEVVTGAAKKQAKEKTPNSSSKSNKPSSKVQSKAESRSKSKLSAPKDEEGSGDDEGEEEEDDHDNTLCGTCGTNDGKDEFWICCDNCEKWYHGKCVKITPARAEHIKQYKCPDCTNKRTRA.

The span at 1 to 23 (MEGGGGGGGGGGGGGGGGGGGGA) shows a compositional bias: gly residues. Disordered stretches follow at residues 1 to 24 (MEGG…GGAP) and 162 to 218 (QAKE…DNTL). Over residues 168-182 (PNSSSKSNKPSSKVQ) the composition is skewed to low complexity. Residues 183–200 (SKAESRSKSKLSAPKDEE) are compositionally biased toward basic and acidic residues. A compositionally biased stretch (acidic residues) spans 201–214 (GSGDDEGEEEEDDH). The PHD-type zinc-finger motif lies at 216 to 268 (NTLCGTCGTNDGKDEFWICCDNCEKWYHGKCVKITPARAEHIKQYKCPDCTNK).

The protein belongs to the Alfin family.

It localises to the nucleus. In terms of biological role, histone-binding component that specifically recognizes H3 tails trimethylated on 'Lys-4' (H3K4me3), which mark transcription start sites of virtually all active genes. The sequence is that of PHD finger protein ALFIN-LIKE 6 from Oryza sativa subsp. indica (Rice).